The primary structure comprises 137 residues: Small heat shock protein IbpA (137 aa).

The sHSP domain maps to 28–137 (NQSNGGYPPY…SLKPRRIEIK (110 aa)).

The protein belongs to the small heat shock protein (HSP20) family. In terms of assembly, monomer. Forms homomultimers of about 100-150 subunits at optimal growth temperatures. Conformation changes to monomers at high temperatures or high ionic concentrations.

It is found in the cytoplasm. Its function is as follows. Associates with aggregated proteins, together with IbpB, to stabilize and protect them from irreversible denaturation and extensive proteolysis during heat shock and oxidative stress. Aggregated proteins bound to the IbpAB complex are more efficiently refolded and reactivated by the ATP-dependent chaperone systems ClpB and DnaK/DnaJ/GrpE. Its activity is ATP-independent. The polypeptide is Small heat shock protein IbpA (Yersinia pseudotuberculosis serotype O:1b (strain IP 31758)).